The chain runs to 493 residues: Glycerol kinase (493 aa).

An ADP-binding site is contributed by threonine 13. Threonine 13, threonine 14, and serine 15 together coordinate ATP. Residue threonine 13 coordinates sn-glycerol 3-phosphate. Residue arginine 17 coordinates ADP. Sn-glycerol 3-phosphate contacts are provided by arginine 83, glutamate 84, tyrosine 135, and aspartate 244. Glycerol contacts are provided by arginine 83, glutamate 84, tyrosine 135, aspartate 244, and glutamine 245. 2 residues coordinate ADP: threonine 266 and glycine 309. Residues threonine 266, glycine 309, glutamine 313, and glycine 410 each contribute to the ATP site. Residues glycine 410 and asparagine 414 each coordinate ADP.

Belongs to the FGGY kinase family.

The enzyme catalyses glycerol + ATP = sn-glycerol 3-phosphate + ADP + H(+). It functions in the pathway polyol metabolism; glycerol degradation via glycerol kinase pathway; sn-glycerol 3-phosphate from glycerol: step 1/1. Its activity is regulated as follows. Inhibited by fructose 1,6-bisphosphate (FBP). In terms of biological role, key enzyme in the regulation of glycerol uptake and metabolism. Catalyzes the phosphorylation of glycerol to yield sn-glycerol 3-phosphate. This is Glycerol kinase from Shewanella piezotolerans (strain WP3 / JCM 13877).